The sequence spans 233 residues: Guanylate kinase (233 aa).

The Guanylate kinase-like domain maps to Gly-3–Leu-184. Ala-10–Ser-17 lines the ATP pocket.

Belongs to the guanylate kinase family.

The protein localises to the cytoplasm. The catalysed reaction is GMP + ATP = GDP + ADP. In terms of biological role, essential for recycling GMP and indirectly, cGMP. The polypeptide is Guanylate kinase (Koribacter versatilis (strain Ellin345)).